The sequence spans 426 residues: L-cysteine:1D-myo-inositol 2-amino-2-deoxy-alpha-D-glucopyranoside ligase (426 aa).

Cys-45 contacts Zn(2+). L-cysteinyl-5'-AMP is bound by residues 45–48 (CGIT), Thr-60, and 83–85 (NVT). A 'HIGH' region motif is present at residues 47-57 (ITPYDATHIGH). Positions 199–204 (ERGGDP) match the 'ERGGDP' region motif. L-cysteinyl-5'-AMP is bound at residue Trp-239. Cys-243 provides a ligand contact to Zn(2+). 261 to 263 (GSD) lines the L-cysteinyl-5'-AMP pocket. A Zn(2+)-binding site is contributed by His-268. L-cysteinyl-5'-AMP is bound at residue Val-294. Positions 300 to 304 (KMSKS) match the 'KMSKS' region motif.

Belongs to the class-I aminoacyl-tRNA synthetase family. MshC subfamily. Monomer. Zn(2+) is required as a cofactor.

It catalyses the reaction 1D-myo-inositol 2-amino-2-deoxy-alpha-D-glucopyranoside + L-cysteine + ATP = 1D-myo-inositol 2-(L-cysteinylamino)-2-deoxy-alpha-D-glucopyranoside + AMP + diphosphate + H(+). Catalyzes the ATP-dependent condensation of GlcN-Ins and L-cysteine to form L-Cys-GlcN-Ins. The sequence is that of L-cysteine:1D-myo-inositol 2-amino-2-deoxy-alpha-D-glucopyranoside ligase from Clavibacter michiganensis subsp. michiganensis (strain NCPPB 382).